The primary structure comprises 425 residues: Na(+)/H(+) antiporter NhaA 1 (425 aa).

Transmembrane regions (helical) follow at residues 20–40 (AGGV…NSPL), 65–85 (PHLW…GLEI), 102–122 (LPFI…LAVT), 131–151 (GWAI…ALLG), 160–180 (LFLT…IALA), 183–203 (ASIK…MMAM), 218–238 (FVLL…AGVL), 272–292 (FLIV…GFSL), 303–323 (IAAG…WAAV), 342–362 (LSVL…LAFA), and 373–393 (LGVI…LRFA).

This sequence belongs to the NhaA Na(+)/H(+) (TC 2.A.33) antiporter family.

It is found in the cell inner membrane. The enzyme catalyses Na(+)(in) + 2 H(+)(out) = Na(+)(out) + 2 H(+)(in). Its function is as follows. Na(+)/H(+) antiporter that extrudes sodium in exchange for external protons. The polypeptide is Na(+)/H(+) antiporter NhaA 1 (Novosphingobium aromaticivorans (strain ATCC 700278 / DSM 12444 / CCUG 56034 / CIP 105152 / NBRC 16084 / F199)).